We begin with the raw amino-acid sequence, 921 residues long: Isoleucine--tRNA ligase (921 aa).

The 'HIGH' region signature appears at 57 to 67 (PYANGDIHMGH). An L-isoleucyl-5'-AMP-binding site is contributed by glutamate 552. A 'KMSKS' region motif is present at residues 593–597 (KMSKS). Lysine 596 lines the ATP pocket. 4 residues coordinate Zn(2+): cysteine 888, cysteine 891, cysteine 908, and cysteine 911.

Belongs to the class-I aminoacyl-tRNA synthetase family. IleS type 1 subfamily. Monomer. Requires Zn(2+) as cofactor.

The protein localises to the cytoplasm. It carries out the reaction tRNA(Ile) + L-isoleucine + ATP = L-isoleucyl-tRNA(Ile) + AMP + diphosphate. Catalyzes the attachment of isoleucine to tRNA(Ile). As IleRS can inadvertently accommodate and process structurally similar amino acids such as valine, to avoid such errors it has two additional distinct tRNA(Ile)-dependent editing activities. One activity is designated as 'pretransfer' editing and involves the hydrolysis of activated Val-AMP. The other activity is designated 'posttransfer' editing and involves deacylation of mischarged Val-tRNA(Ile). The chain is Isoleucine--tRNA ligase from Bacillus anthracis (strain A0248).